We begin with the raw amino-acid sequence, 131 residues long: MVLPASMRLRGHRCFDHLHRRGKRYYGTWMVLRKAPSNAKLLRRDIHGLLTQTQPHSCRIAVVISGKVHKRAVVRNRLRRLLHDHLRLRFEARSTHSDVWLLISLRPGADADEANLLEECDRLLEEAGLQP.

Belongs to the RnpA family. As to quaternary structure, consists of a catalytic RNA component (M1 or rnpB) and a protein subunit.

It carries out the reaction Endonucleolytic cleavage of RNA, removing 5'-extranucleotides from tRNA precursor.. In terms of biological role, RNaseP catalyzes the removal of the 5'-leader sequence from pre-tRNA to produce the mature 5'-terminus. It can also cleave other RNA substrates such as 4.5S RNA. The protein component plays an auxiliary but essential role in vivo by binding to the 5'-leader sequence and broadening the substrate specificity of the ribozyme. This Synechococcus sp. (strain WH7803) protein is Ribonuclease P protein component.